A 94-amino-acid chain; its full sequence is Putative pterin-4-alpha-carbinolamine dehydratase (94 aa).

It belongs to the pterin-4-alpha-carbinolamine dehydratase family.

It catalyses the reaction (4aS,6R)-4a-hydroxy-L-erythro-5,6,7,8-tetrahydrobiopterin = (6R)-L-erythro-6,7-dihydrobiopterin + H2O. The polypeptide is Putative pterin-4-alpha-carbinolamine dehydratase (Mycobacteroides abscessus (strain ATCC 19977 / DSM 44196 / CCUG 20993 / CIP 104536 / JCM 13569 / NCTC 13031 / TMC 1543 / L948) (Mycobacterium abscessus)).